The primary structure comprises 103 residues: Somatoliberin (103 aa).

Positions 1–19 (MLLWVLFVILILTSGSHCS) are cleaved as a signal peptide. Propeptides lie at residues 20–30 (LPPSPPFRMQR) and 74–103 (QEDS…SADA).

This sequence belongs to the glucagon family.

The protein localises to the secreted. In terms of biological role, GRF is released by the hypothalamus and acts on the adenohypophyse to stimulate the secretion of growth hormone. This Mus musculus (Mouse) protein is Somatoliberin (Ghrh).